We begin with the raw amino-acid sequence, 348 residues long: Rhodopsin (348 aa).

The residue at position 1 (Met1) is an N-acetylmethionine. Residues Met1 to Gln36 lie on the Extracellular side of the membrane. 2 N-linked (GlcNAc...) asparagine glycosylation sites follow: Asn2 and Asn15. The chain crosses the membrane as a helical span at residues Phe37–Val61. The Cytoplasmic portion of the chain corresponds to Thr62 to Asn73. The chain crosses the membrane as a helical span at residues Tyr74–Tyr96. The Extracellular segment spans residues Thr97 to Cys110. Residues Cys110 and Cys187 are joined by a disulfide bond. The chain crosses the membrane as a helical span at residues Asn111–Ile133. A 'Ionic lock' involved in activated form stabilization motif is present at residues Glu134–Tyr136. Residues Glu134–His152 are Cytoplasmic-facing. The helical transmembrane segment at Ala153–Val173 threads the bilayer. The Extracellular portion of the chain corresponds to Gly174 to Ser202. Glu201 contacts Zn(2+). The chain crosses the membrane as a helical span at residues Phe203–Gly224. The Cytoplasmic portion of the chain corresponds to Gln225–Arg252. The chain crosses the membrane as a helical span at residues Met253–Tyr274. The Extracellular portion of the chain corresponds to Ile275–Ile286. Zn(2+) is bound at residue Gln279. Residues Phe287–Met308 form a helical membrane-spanning segment. Position 296 is an N6-(retinylidene)lysine (Lys296). Residues Met309–Ala348 are Cytoplasmic-facing. 2 S-palmitoyl cysteine lipidation sites follow: Cys322 and Cys323. Residues Asp330 to Ala348 are interaction with SAG. Ser334 is subject to Phosphoserine. Residues Thr335 and Thr336 each carry the phosphothreonine modification. Ser338 is subject to Phosphoserine. Phosphothreonine occurs at positions 340 and 342. Ser343 carries the phosphoserine modification.

The protein belongs to the G-protein coupled receptor 1 family. Opsin subfamily. In terms of assembly, homodimer. May form a complex composed of RHO, GRK1 and RCVRN in a Ca(2+)-dependent manner; RCVRN prevents the interaction between GRK1 and RHO. Interacts with GRK1. Interacts (phosphorylated form) with SAG. Interacts with GNAT1. Interacts with GNAT3. SAG and G-proteins compete for a common binding site. Interacts with PRCD; the interaction promotes PRCD stability. Forms a complex with ASAP1 and ARF4. Forms a complex with ASAP1, RAB11A, Rabin8/RAB3IP, ARF4 and RAB11FIP3; the complex regulates Golgi-to-cilia rhodopsin/RHO transport in photoreceptors. Post-translationally, phosphorylated on some or all of the serine and threonine residues present in the C-terminal region. In terms of processing, contains one covalently linked retinal chromophore. Upon light absorption, the covalently bound 11-cis-retinal is converted to all-trans-retinal. After hydrolysis of the Schiff base and release of the covalently bound all-trans-retinal, active rhodopsin is regenerated by binding of a fresh molecule of 11-cis-retinal.

It localises to the membrane. It is found in the cell projection. The protein localises to the cilium. Its subcellular location is the photoreceptor outer segment. In terms of biological role, photoreceptor required for image-forming vision at low light intensity. Required for photoreceptor cell viability after birth. Light-induced isomerization of 11-cis to all-trans retinal triggers a conformational change that activates signaling via G-proteins. Subsequent receptor phosphorylation mediates displacement of the bound G-protein alpha subunit by the arrestin SAG and terminates signaling. The polypeptide is Rhodopsin (RHO) (Globicephala melas (Long-finned pilot whale)).